Consider the following 187-residue polypeptide: Peptide deformylase 1 (187 aa).

The Fe cation site is built by C107 and H149. E150 is a catalytic residue. H153 serves as a coordination point for Fe cation.

Belongs to the polypeptide deformylase family. The cofactor is Fe(2+).

The enzyme catalyses N-terminal N-formyl-L-methionyl-[peptide] + H2O = N-terminal L-methionyl-[peptide] + formate. Functionally, removes the formyl group from the N-terminal Met of newly synthesized proteins. Requires at least a dipeptide for an efficient rate of reaction. N-terminal L-methionine is a prerequisite for activity but the enzyme has broad specificity at other positions. This chain is Peptide deformylase 1, found in Nostoc sp. (strain PCC 7120 / SAG 25.82 / UTEX 2576).